The sequence spans 247 residues: Triosephosphate isomerase (247 aa).

A substrate-binding site is contributed by 8-10 (NWK). Residue histidine 95 is the Electrophile of the active site. Glutamate 162 (proton acceptor) is an active-site residue. The substrate site is built by glycine 168 and serine 207.

It belongs to the triosephosphate isomerase family. As to quaternary structure, homodimer.

The protein localises to the cytoplasm. The catalysed reaction is D-glyceraldehyde 3-phosphate = dihydroxyacetone phosphate. Its pathway is carbohydrate biosynthesis; gluconeogenesis. It functions in the pathway carbohydrate degradation; glycolysis; D-glyceraldehyde 3-phosphate from glycerone phosphate: step 1/1. Its function is as follows. Involved in the gluconeogenesis. Catalyzes stereospecifically the conversion of dihydroxyacetone phosphate (DHAP) to D-glyceraldehyde-3-phosphate (G3P). The polypeptide is Triosephosphate isomerase (Gluconacetobacter diazotrophicus (strain ATCC 49037 / DSM 5601 / CCUG 37298 / CIP 103539 / LMG 7603 / PAl5)).